The following is a 148-amino-acid chain: Putative nickel-responsive regulator (148 aa).

Ni(2+) contacts are provided by H88, H99, H101, and C107.

This sequence belongs to the transcriptional regulatory CopG/NikR family. As to quaternary structure, homotetramer. Ni(2+) is required as a cofactor.

Transcriptional regulator. In Helicobacter pylori (strain ATCC 700392 / 26695) (Campylobacter pylori), this protein is Putative nickel-responsive regulator.